A 309-amino-acid polypeptide reads, in one-letter code: tRNA pseudouridine synthase B (309 aa).

Asp39 serves as the catalytic Nucleophile.

Belongs to the pseudouridine synthase TruB family. Type 1 subfamily.

It carries out the reaction uridine(55) in tRNA = pseudouridine(55) in tRNA. In terms of biological role, responsible for synthesis of pseudouridine from uracil-55 in the psi GC loop of transfer RNAs. The chain is tRNA pseudouridine synthase B from Bacillus velezensis (strain DSM 23117 / BGSC 10A6 / LMG 26770 / FZB42) (Bacillus amyloliquefaciens subsp. plantarum).